We begin with the raw amino-acid sequence, 66 residues long: DNA gyrase inhibitor YacG (66 aa).

The Zn(2+) site is built by Cys9, Cys12, Cys28, and Cys32.

It belongs to the DNA gyrase inhibitor YacG family. As to quaternary structure, interacts with GyrB. Zn(2+) is required as a cofactor.

Inhibits all the catalytic activities of DNA gyrase by preventing its interaction with DNA. Acts by binding directly to the C-terminal domain of GyrB, which probably disrupts DNA binding by the gyrase. The polypeptide is DNA gyrase inhibitor YacG (Pseudomonas fluorescens (strain Pf0-1)).